Here is a 716-residue protein sequence, read N- to C-terminus: 1,4-alpha-glucan branching enzyme GlgB (716 aa).

The active-site Nucleophile is the Asp-398. The active-site Proton donor is Glu-451.

Belongs to the glycosyl hydrolase 13 family. GlgB subfamily. In terms of assembly, monomer.

The enzyme catalyses Transfers a segment of a (1-&gt;4)-alpha-D-glucan chain to a primary hydroxy group in a similar glucan chain.. Its pathway is glycan biosynthesis; glycogen biosynthesis. Its function is as follows. Catalyzes the formation of the alpha-1,6-glucosidic linkages in glycogen by scission of a 1,4-alpha-linked oligosaccharide from growing alpha-1,4-glucan chains and the subsequent attachment of the oligosaccharide to the alpha-1,6 position. In Nitrobacter hamburgensis (strain DSM 10229 / NCIMB 13809 / X14), this protein is 1,4-alpha-glucan branching enzyme GlgB.